We begin with the raw amino-acid sequence, 393 residues long: Protein TsgA (393 aa).

12 consecutive transmembrane segments (helical) span residues 11–31 (WISF…GMVM), 51–71 (FLNA…EIVP), 78–98 (FGFL…SLAL), 101–121 (AAMF…TFLI), 134–154 (LLFT…IAAF), 162–182 (WYWV…LTFG), 206–226 (IGVL…LGFI), 245–265 (TLVS…SFIL), 273–293 (ILTV…TGTP), 297–317 (AWSI…IITL), 332–352 (FVLT…GPIV), and 361–381 (LLTA…LGFV).

Belongs to the major facilitator superfamily. TsgA family.

It localises to the cell inner membrane. The polypeptide is Protein TsgA (Shigella dysenteriae serotype 1 (strain Sd197)).